The primary structure comprises 225 residues: Protein ZW2 (225 aa).

One can recognise a DOG1 domain in the interval 7 to 225 (SETFASFFND…FYLRLRDLGV (219 aa)).

Its function is as follows. May be involved in the regulation of abscisic acid (ABA) sensitivity. The chain is Protein ZW2 from Arabidopsis thaliana (Mouse-ear cress).